The chain runs to 215 residues: Adenylate kinase (215 aa).

Position 10 to 15 (10 to 15) interacts with ATP; that stretch reads GSGKGT. The interval 30-59 is NMP; it reads STGDILREHVRNGTELGKEAKKYMDAGQLV. AMP-binding positions include Thr-31, Arg-36, 57–59, 85–88, and Gln-92; these read QLV and GYPR. The segment at 126–162 is LID; it reads GRRMCKCGRSYHIIFNPPKVPGKCDECGGELYHRDDD. Arg-127 lines the ATP pocket. 2 residues coordinate Zn(2+): Cys-130 and Cys-132. An ATP-binding site is contributed by 135–136; that stretch reads SY. Residues Cys-149 and Cys-152 each contribute to the Zn(2+) site. Arg-159 and Arg-170 together coordinate AMP. Residue Gly-198 coordinates ATP.

Belongs to the adenylate kinase family. Monomer.

It is found in the cytoplasm. It carries out the reaction AMP + ATP = 2 ADP. It participates in purine metabolism; AMP biosynthesis via salvage pathway; AMP from ADP: step 1/1. Catalyzes the reversible transfer of the terminal phosphate group between ATP and AMP. Plays an important role in cellular energy homeostasis and in adenine nucleotide metabolism. This Methanothrix thermoacetophila (strain DSM 6194 / JCM 14653 / NBRC 101360 / PT) (Methanosaeta thermophila) protein is Adenylate kinase.